The following is a 465-amino-acid chain: Zinc finger CCCH domain-containing protein 58 (465 aa).

Residues 1 to 26 (MERYGGAGEDESRSDPSHEWSAQGTE) are disordered. 3 C3H1-type zinc fingers span residues 51-79 (RPDE…HPRN), 97-125 (RMGQ…HPRQ), and 145-173 (RPGE…HPVP). 2 disordered regions span residues 173–200 (PPGV…LQSQ) and 274–302 (LSPS…QRPE). Residues 177-191 (QAPSQQQQQQLSAGP) show a composition bias toward low complexity. Over residues 283–298 (SGPSSTGVSNKEQTFP) the composition is skewed to polar residues. 2 C3H1-type zinc fingers span residues 300–328 (RPEQ…HPME) and 345–373 (RPGA…HSLG). Low complexity predominate over residues 397 to 431 (SLGTLAPSSSSDQCTELISSSSIEPITTTTGGSET). Residues 397 to 465 (SLGTLAPSSS…SASNEAKTSS (69 aa)) form a disordered region. The segment covering 444 to 453 (SHPEPAETNK) has biased composition (basic and acidic residues). Residues 454–465 (GDSASNEAKTSS) are compositionally biased toward polar residues.

It localises to the nucleus. The polypeptide is Zinc finger CCCH domain-containing protein 58 (Arabidopsis thaliana (Mouse-ear cress)).